Reading from the N-terminus, the 231-residue chain is Large ribosomal subunit protein uL1 (231 aa).

Belongs to the universal ribosomal protein uL1 family. As to quaternary structure, part of the 50S ribosomal subunit.

Binds directly to 23S rRNA. The L1 stalk is quite mobile in the ribosome, and is involved in E site tRNA release. In terms of biological role, protein L1 is also a translational repressor protein, it controls the translation of the L11 operon by binding to its mRNA. This Acidovorax ebreus (strain TPSY) (Diaphorobacter sp. (strain TPSY)) protein is Large ribosomal subunit protein uL1.